Reading from the N-terminus, the 399-residue chain is Argininosuccinate synthase (399 aa).

ATP is bound at residue 8 to 16; the sequence is AYSGGLDTS. L-citrulline is bound by residues Tyr-87 and Ser-92. Gly-117 lines the ATP pocket. The L-aspartate site is built by Thr-119, Asn-123, and Asp-124. Asn-123 lines the L-citrulline pocket. Positions 127, 176, 185, 261, and 273 each coordinate L-citrulline.

It belongs to the argininosuccinate synthase family. Type 1 subfamily. As to quaternary structure, homotetramer.

The protein resides in the cytoplasm. The enzyme catalyses L-citrulline + L-aspartate + ATP = 2-(N(omega)-L-arginino)succinate + AMP + diphosphate + H(+). Its pathway is amino-acid biosynthesis; L-arginine biosynthesis; L-arginine from L-ornithine and carbamoyl phosphate: step 2/3. The chain is Argininosuccinate synthase from Clostridioides difficile (strain 630) (Peptoclostridium difficile).